Consider the following 291-residue polypeptide: Serine hydrolase BPHL (291 aa).

The N-terminal stretch at 1-37 (MVAVLGGRGVLRLRLLLSALKPGIHVPRAGPAAAFGT) is a signal peptide. The 120-residue stretch at 62–181 (AVLLLPGMLG…DSMIYEGIRD (120 aa)) folds into the AB hydrolase-1 domain. N6-acetyllysine is present on residues K86 and K119. K126 is subject to N6-acetyllysine; alternate. K126 is modified (N6-succinyllysine; alternate). S139 (nucleophile) is an active-site residue. K184 bears the N6-succinyllysine mark. Residue K191 is modified to N6-acetyllysine; alternate. K191 is modified (N6-succinyllysine; alternate). The residue at position 217 (K217) is an N6-acetyllysine. Position 221 (D221) interacts with Mg(2+). At K243 the chain carries N6-acetyllysine. Residue D244 is the Charge relay system of the active site. N6-acetyllysine; alternate is present on residues K260 and K271. An N6-succinyllysine; alternate mark is found at K260 and K271. The active-site Charge relay system is the H272.

This sequence belongs to the AB hydrolase superfamily. Lipase family. Monomer. May also form homodimers. In terms of tissue distribution, expressed at high levels in liver and kidney and lower levels in heart, intestine and skeletal muscle.

Its subcellular location is the mitochondrion. It carries out the reaction L-homocysteine thiolactone + H2O = L-homocysteine + H(+). The catalysed reaction is valacyclovir + H2O = acyclovir + L-valine + H(+). In terms of biological role, specific alpha-amino acid ester serine hydrolase that prefers small, hydrophobic, and aromatic side chains and does not have a stringent requirement for the leaving group other than preferring a primary alcohol. Has homocysteine-thiolactonase activity (in vitro) and may play a significant role in the detoxification of homocysteine thiolactone in vivo. Catalyzes the hydrolytic activation of amino acid ester prodrugs of nucleoside analogs such as valacyclovir and valganciclovir, converting them into their active forms (acyclovir and ganciclovir). The sequence is that of Serine hydrolase BPHL (BPHL) from Homo sapiens (Human).